Consider the following 196-residue polypeptide: Imidazole glycerol phosphate synthase subunit HisH (196 aa).

One can recognise a Glutamine amidotransferase type-1 domain in the interval 2–196 (NVVILDTGCA…AQLLKNFLEM (195 aa)). Catalysis depends on C77, which acts as the Nucleophile. Catalysis depends on residues H178 and E180.

Heterodimer of HisH and HisF.

It localises to the cytoplasm. It catalyses the reaction 5-[(5-phospho-1-deoxy-D-ribulos-1-ylimino)methylamino]-1-(5-phospho-beta-D-ribosyl)imidazole-4-carboxamide + L-glutamine = D-erythro-1-(imidazol-4-yl)glycerol 3-phosphate + 5-amino-1-(5-phospho-beta-D-ribosyl)imidazole-4-carboxamide + L-glutamate + H(+). It carries out the reaction L-glutamine + H2O = L-glutamate + NH4(+). The protein operates within amino-acid biosynthesis; L-histidine biosynthesis; L-histidine from 5-phospho-alpha-D-ribose 1-diphosphate: step 5/9. IGPS catalyzes the conversion of PRFAR and glutamine to IGP, AICAR and glutamate. The HisH subunit catalyzes the hydrolysis of glutamine to glutamate and ammonia as part of the synthesis of IGP and AICAR. The resulting ammonia molecule is channeled to the active site of HisF. The sequence is that of Imidazole glycerol phosphate synthase subunit HisH from Salmonella choleraesuis (strain SC-B67).